The chain runs to 566 residues: MPDVKERAARKEPGAAESASRESRGGNTRESASSARGTDRVGSTVARARPPSPQGPRRGAVKTAPRGPVGHGGLRTGPTSRCPQPSARAKLPSVTRGAPLPPSPGKGHLGGTPSSHRLGMTERVHDASKLDCQLEERSLSSSSLKGKVKDTMPSDFWEHLNEQLSAVPPDFSCALELLKEIKEILLSLLLPRQSRLKNEIEEALDMEFLQQQADRGDLNVSYLSKYILNMMVLLCAPIRDEAVQRLENISDPVRLLRGIFQVLGQMKMDMVNYTIQSLQPQLQEHSVQFERAQFQERLNKEPRLLNHTTKWLTQAATQLIAPSASSSDLQDCSSSAGPSPSDVAVPEPLSPAMVLSQGFLNLLTWDPENEEFPETLVADRPRLQELESQQSQLTILASVLLVASSFSDSGLFSSPQFVDKLKQITKSLVEDFNSRPEEVMQSVSEQVVEEVHQGLESMGLAALSSENTASLVGQLQNIAKKENCVRSVIDQRIHLFLKCCFVLGVQRSLLDLPGGLTLIEAELAELGQKFVSLTHHNQQVFAPYYTEILKTLISPAQTLATKGGSL.

Positions 1–24 (MPDVKERAARKEPGAAESASRESR) are enriched in basic and acidic residues. Disordered regions lie at residues 1–115 (MPDV…TPSS) and 326–347 (SSDL…AVPE). Residues 25–36 (GGNTRESASSAR) are compositionally biased toward polar residues. Residue Ser-103 is modified to Phosphoserine. The span at 326-336 (SSDLQDCSSSA) shows a compositional bias: low complexity. A helical membrane pass occupies residues 393–412 (LTILASVLLVASSFSDSGLF).

The protein belongs to the TCP11 family. Found in a complex at least composed of MROH2B isoform 2, PRKACA isoform 2 and TCP11. Interacts with MROH2B isoform 2. Interacts with PRKACA isoform 2. Interacts with ODF1 (via leucine zipper motif). Constitutively phosphorylated on serine, threonine and tyrosine residues within the head and tail regions of noncapacitated spermatozoa. Phosphorylation on tyrosine residues increases upon sperm capacitation within the acrosomal region in a protein kinase A (PKA)-dependent signaling pathway. In terms of tissue distribution, testis-specific. Expressed in mature epididymal spermatozoa (at protein level).

It is found in the membrane. The protein resides in the cell projection. The protein localises to the cilium. Its subcellular location is the flagellum. It localises to the cytoplasmic vesicle. It is found in the secretory vesicle. The protein resides in the acrosome. Plays a role in the process of sperm capacitation and acrosome reactions. Probable receptor for the putative fertilization-promoting peptide (FPP) at the sperm membrane that may modulate the activity of the adenylyl cyclase cAMP pathway. The protein is T-complex protein 11 (Tcp11) of Mus musculus (Mouse).